The primary structure comprises 597 residues: Ribosomal oxygenase 1 (597 aa).

M1 carries the post-translational modification N-acetylmethionine. The disordered stretch occupies residues 1–138 (MDELPNGNGA…HVDDPERPWD (138 aa)). Composition is skewed to basic residues over residues 14-24 (KRGRGRRRRQP) and 37-48 (RPRKVRRHRKSA). A compositionally biased stretch (low complexity) spans 49-62 (ASRVAALRARALLS). Phosphoserine occurs at positions 62 and 65. Positions 72–81 (VRGKRERPAE) are enriched in basic and acidic residues. S86 bears the Phosphoserine mark. The region spanning 250-395 (CSLRLLCPQA…DFLEAVLPLA (146 aa)) is the JmjC domain. Fe cation contacts are provided by H296, D298, and H361.

The protein belongs to the ROX family. NO66 subfamily. Interacts with SP7/OSX; the interaction is direct. Interacts with MYC. Interacts with PHF19; leading to its recruitment to H3K36me3 sites. Fe(2+) serves as cofactor.

It localises to the nucleus. Its subcellular location is the nucleolus. The protein localises to the nucleoplasm. The catalysed reaction is N(6),N(6)-dimethyl-L-lysyl(36)-[histone H3] + 2 2-oxoglutarate + 2 O2 = L-lysyl(36)-[histone H3] + 2 formaldehyde + 2 succinate + 2 CO2. It catalyses the reaction N(6)-methyl-L-lysyl-[protein] + 2-oxoglutarate + O2 = L-lysyl-[protein] + formaldehyde + succinate + CO2. The enzyme catalyses L-histidyl-[protein] + 2-oxoglutarate + O2 = (3S)-3-hydroxy-L-histidyl-[protein] + succinate + CO2. In terms of biological role, oxygenase that can act as both a histone lysine demethylase and a ribosomal histidine hydroxylase. Specifically demethylates 'Lys-4' (H3K4me) and 'Lys-36' (H3K36me) of histone H3, thereby playing a central role in histone code. Preferentially demethylates trimethylated H3 'Lys-4' (H3K4me3) and monomethylated H3 'Lys-4' (H3K4me1) residues, while it has weaker activity for dimethylated H3 'Lys-36' (H3K36me2). Acts as a regulator of osteoblast differentiation via its interaction with SP7/OSX by demethylating H3K4me and H3K36me, thereby inhibiting SP7/OSX-mediated promoter activation. Also catalyzes demethylation of non-histone proteins, such as CGAS: demethylation of monomethylated CGAS promotes interaction between CGAS and PARP1, followed by PARP1 inactivation. Also catalyzes the hydroxylation of 60S ribosomal protein L8 on 'His-216', thereby playing a role in ribosome biogenesis. Participates in MYC-induced transcriptional activation. The polypeptide is Ribosomal oxygenase 1 (Rattus norvegicus (Rat)).